A 324-amino-acid chain; its full sequence is Glycerol-3-phosphate dehydrogenase [NAD(P)+] (324 aa).

Residues Ser10, Phe11, Arg31, and Lys106 each contribute to the NADPH site. Positions 106, 134, and 136 each coordinate sn-glycerol 3-phosphate. NADPH is bound at residue Ala138. Sn-glycerol 3-phosphate is bound by residues Lys189, Asp244, Ser254, Arg255, and Asn256. Lys189 (proton acceptor) is an active-site residue. NADPH is bound at residue Arg255. Ile279 and Glu281 together coordinate NADPH.

Belongs to the NAD-dependent glycerol-3-phosphate dehydrogenase family.

It localises to the cytoplasm. The enzyme catalyses sn-glycerol 3-phosphate + NAD(+) = dihydroxyacetone phosphate + NADH + H(+). The catalysed reaction is sn-glycerol 3-phosphate + NADP(+) = dihydroxyacetone phosphate + NADPH + H(+). The protein operates within membrane lipid metabolism; glycerophospholipid metabolism. Its function is as follows. Catalyzes the reduction of the glycolytic intermediate dihydroxyacetone phosphate (DHAP) to sn-glycerol 3-phosphate (G3P), the key precursor for phospholipid synthesis. The protein is Glycerol-3-phosphate dehydrogenase [NAD(P)+] of Ehrlichia canis (strain Jake).